Here is a 302-residue protein sequence, read N- to C-terminus: CRISPR-associated endonuclease Cas1 1 (302 aa).

Mn(2+) contacts are provided by Glu159, His219, and Glu234.

This sequence belongs to the CRISPR-associated endonuclease Cas1 family. In terms of assembly, homodimer, forms a heterotetramer with a Cas2 homodimer. Mg(2+) serves as cofactor. The cofactor is Mn(2+).

Its function is as follows. CRISPR (clustered regularly interspaced short palindromic repeat), is an adaptive immune system that provides protection against mobile genetic elements (viruses, transposable elements and conjugative plasmids). CRISPR clusters contain spacers, sequences complementary to antecedent mobile elements, and target invading nucleic acids. CRISPR clusters are transcribed and processed into CRISPR RNA (crRNA). Acts as a dsDNA endonuclease. Involved in the integration of spacer DNA into the CRISPR cassette. This Pyrobaculum aerophilum (strain ATCC 51768 / DSM 7523 / JCM 9630 / CIP 104966 / NBRC 100827 / IM2) protein is CRISPR-associated endonuclease Cas1 1.